A 559-amino-acid chain; its full sequence is Cocaine esterase (559 aa).

An N-terminal signal peptide occupies residues 1 to 26 (MRLHRLRARLSAVACGLLLLLVRGQG). The residue at position 27 (glutamine 27) is a Pyrrolidone carboxylic acid. An intrachain disulfide couples cysteine 95 to cysteine 123. Asparagine 111 carries N-linked (GlcNAc...) asparagine glycosylation. Catalysis depends on serine 228, which acts as the Acyl-ester intermediate. A glycan (N-linked (GlcNAc...) asparagine) is linked at asparagine 276. Cysteines 280 and 291 form a disulfide. Catalysis depends on charge relay system residues glutamate 345 and histidine 457. Residues 556–559 (HTEL) carry the Prevents secretion from ER motif.

The protein belongs to the type-B carboxylesterase/lipase family. In terms of assembly, monomer. Post-translationally, glycosylated. As to expression, preferentially expressed in intestine with moderate expression in liver. Within the intestine, highest expression is found in small intestine with lower expression in colon and rectum.

It is found in the endoplasmic reticulum lumen. The catalysed reaction is cocaine + H2O = ecgonine methyl ester + benzoate + H(+). It carries out the reaction a carboxylic ester + H2O = an alcohol + a carboxylate + H(+). It catalyses the reaction 4-methylumbelliferyl acetate + H2O = 4-methylumbelliferone + acetate + H(+). The enzyme catalyses 2-(5Z,8Z,11Z,14Z-eicosatetraenoyl)-glycerol + H2O = glycerol + (5Z,8Z,11Z,14Z)-eicosatetraenoate + H(+). The catalysed reaction is prostaglandin E2 1-glyceryl ester + H2O = prostaglandin E2 + glycerol + H(+). It carries out the reaction prostaglandin F2alpha 1-glyceryl ester + H2O = prostaglandin F2alpha + glycerol + H(+). In terms of biological role, involved in the detoxification of xenobiotics and in the activation of ester and amide prodrugs. Shows high catalytic efficiency for hydrolysis of cocaine, 4-methylumbelliferyl acetate, heroin and 6-monoacetylmorphine. Hydrolyzes aspirin, substrates with large alcohol group and small acyl group and endogenous lipids such as triacylglycerol. Converts monoacylglycerides to free fatty acids and glycerol. Hydrolyzes of 2-arachidonoylglycerol and prostaglandins. This is Cocaine esterase from Homo sapiens (Human).